A 397-amino-acid polypeptide reads, in one-letter code: MFPTDPVSNLAALIRCPSVTPAEGGALAALEAMLAPVGFKVDRVVAKEPGTPDIENLYARTGGEGPHLMFAGHTDVVPVGDEAAWSRPPFSAAIAEGEMYGRGAVDMKGGIACFVAAVARHIEKHGAPKGSISFLITGDEEGPAINGTVKLLEWAAARGERWDACLVGEPTNPDCIGDMIKIGRRGSLSGRITVHGVQGHAAYPHLADNPVRSILQIAQALMDPPFDDGTENFQPSNLEVTTIDVGNTAVNVIPAKASAAFNIRFNDRWTAESLMAEIVARLDRAAAGSALRPGRAPARYEIVWNERPSHVFLTRNNALIDSLSGAVEAVTGRQPQLSTTGGTSDARFIKDYCPVVEFGLVGKTMHMVDERVALADLETLTGIYETFIARWFGHAAA.

H73 is a Zn(2+) binding site. The active site involves D75. D106 contributes to the Zn(2+) binding site. E140 acts as the Proton acceptor in catalysis. Residues E141, E169, and H366 each coordinate Zn(2+).

This sequence belongs to the peptidase M20A family. DapE subfamily. As to quaternary structure, homodimer. Requires Zn(2+) as cofactor. Co(2+) serves as cofactor.

The enzyme catalyses N-succinyl-(2S,6S)-2,6-diaminopimelate + H2O = (2S,6S)-2,6-diaminopimelate + succinate. The protein operates within amino-acid biosynthesis; L-lysine biosynthesis via DAP pathway; LL-2,6-diaminopimelate from (S)-tetrahydrodipicolinate (succinylase route): step 3/3. Catalyzes the hydrolysis of N-succinyl-L,L-diaminopimelic acid (SDAP), forming succinate and LL-2,6-diaminopimelate (DAP), an intermediate involved in the bacterial biosynthesis of lysine and meso-diaminopimelic acid, an essential component of bacterial cell walls. This is Succinyl-diaminopimelate desuccinylase from Rhizobium meliloti (strain 1021) (Ensifer meliloti).